Consider the following 926-residue polypeptide: Staphylococcal nuclease domain-containing protein 1 (926 aa).

Residues 1–17 (MATAANTATAAGAAKDA) show a composition bias toward low complexity. The interval 1 to 24 (MATAANTATAAGAAKDAPPAPTKS) is disordered. TNase-like domains lie at 23–167 (KSLS…KWSP), 195–333 (NPVK…QWQD), 346–505 (KDFS…LHAK), and 535–674 (LRTE…IWTN). The region spanning 749-807 (TPKRGDLVAAQFTLDNQWYRAKVERVQGSNATVLYIDYGNKETLPTNRLAALPPAFSSE) is the Tudor domain. The interval 760–788 (FTLDNQWYRAKVERVQGSNATVLYIDYGN) is involved in dimethylarginine binding.

Associates with the RNA-induced silencing complex (RISC). Interacts with the RISC components AGO2, Fmr1 and vig. Interacts with piwi. Expressed in adult ovaries and testis (at protein level).

The protein resides in the cytoplasm. It is found in the nucleus. It catalyses the reaction Endonucleolytic cleavage to nucleoside 3'-phosphates and 3'-phosphooligonucleotide end-products.. Its function is as follows. Endonuclease which shows activity towards both DNA and RNA substrates. Has a role in translation regulation throught its association with the with the RNA-induced silencing complex (RISC). Plays a role in spermatogenesis probably by negatively regulating piwi expression in the germline. Together with piwi, might be involved in transposon repression in the germline. This is Staphylococcal nuclease domain-containing protein 1 from Drosophila melanogaster (Fruit fly).